Consider the following 346-residue polypeptide: NADH-ubiquinone oxidoreductase chain 2 (346 aa).

A run of 11 helical transmembrane segments spans residues Met-1–Ser-21, Trp-26–Trp-46, Phe-60–Gly-80, Met-96–Val-116, Leu-122–Leu-142, Ser-151–Gly-171, Leu-178–Ser-198, Leu-199–Leu-219, Val-242–Gly-262, Leu-274–Leu-294, and Leu-320–Gly-340.

It belongs to the complex I subunit 2 family.

It localises to the mitochondrion inner membrane. The catalysed reaction is a ubiquinone + NADH + 5 H(+)(in) = a ubiquinol + NAD(+) + 4 H(+)(out). Its function is as follows. Core subunit of the mitochondrial membrane respiratory chain NADH dehydrogenase (Complex I) that is believed to belong to the minimal assembly required for catalysis. Complex I functions in the transfer of electrons from NADH to the respiratory chain. The immediate electron acceptor for the enzyme is believed to be ubiquinone. This Branchiostoma lanceolatum (Common lancelet) protein is NADH-ubiquinone oxidoreductase chain 2 (ND2).